The chain runs to 152 residues: Deoxyuridine 5'-triphosphate nucleotidohydrolase (152 aa).

Substrate contacts are provided by residues 71–73 (RSG), asparagine 84, and 88–90 (TVD).

The protein belongs to the dUTPase family. It depends on Mg(2+) as a cofactor.

It catalyses the reaction dUTP + H2O = dUMP + diphosphate + H(+). It functions in the pathway pyrimidine metabolism; dUMP biosynthesis; dUMP from dCTP (dUTP route): step 2/2. Its function is as follows. This enzyme is involved in nucleotide metabolism: it produces dUMP, the immediate precursor of thymidine nucleotides and it decreases the intracellular concentration of dUTP so that uracil cannot be incorporated into DNA. The protein is Deoxyuridine 5'-triphosphate nucleotidohydrolase of Maricaulis maris (strain MCS10) (Caulobacter maris).